The sequence spans 426 residues: Serine protease HTRA2, mitochondrial (426 aa).

The N-terminal 30 residues, 1 to 30, are a transit peptide targeting the mitochondrion; that stretch reads MALRGSHRLDDFIRRCSALTLFHSQAPSRR. A disordered region spans residues 30–59; that stretch reads RVSHCGRDRRQQQDPPGQGRQEQQESGGGH. Positions 31 to 78 are excised as a propeptide; the sequence is VSHCGRDRRQQQDPPGQGRQEQQESGGGHWSRFGWRSLIRFFVPFSLG. Positions 42–54 are enriched in low complexity; that stretch reads QDPPGQGRQEQQE. A helical membrane pass occupies residues 68 to 86; sequence LIRFFVPFSLGAVASSLVI. An IAP-binding motif is present at residues 79–82; sequence AVAS. The interval 143–306 is serine protease; that stretch reads SNGSGFIIEQ…IPIDYVKVFL (164 aa). Active-site charge relay system residues include His-161, Asp-193, and Ser-270. One can recognise a PDZ domain in the interval 329–414; the sequence is MGITMLTLTP…HLDIVILRGV (86 aa).

It belongs to the peptidase S1C family. In terms of assembly, interacts with th/DIAP1 (via BIR 2 domain).

It localises to the mitochondrion intermembrane space. Its subcellular location is the mitochondrion membrane. It carries out the reaction Cleavage of non-polar aliphatic amino-acids at the P1 position, with a preference for Val, Ile and Met. At the P2 and P3 positions, Arg is selected most strongly with a secondary preference for other hydrophilic residues.. In terms of biological role, serine protease that shows proteolytic activity against a non-specific substrate beta-casein. Promotes or induces cell death either by direct binding to and inhibition of BIRC proteins (also called inhibitor of apoptosis proteins, IAPs), leading to an increase in caspase activity, or by a BIRC inhibition-independent, caspase-independent and serine protease activity-dependent mechanism. Can antagonize antiapoptotic activity of th/Diap1 by directly inducing the degradation of th/Diap1. This is Serine protease HTRA2, mitochondrial from Drosophila ananassae (Fruit fly).